We begin with the raw amino-acid sequence, 214 residues long: Probable transaldolase (214 aa).

The active-site Schiff-base intermediate with substrate is the lysine 83.

Belongs to the transaldolase family. Type 3B subfamily.

The protein resides in the cytoplasm. It catalyses the reaction D-sedoheptulose 7-phosphate + D-glyceraldehyde 3-phosphate = D-erythrose 4-phosphate + beta-D-fructose 6-phosphate. Its pathway is carbohydrate degradation; pentose phosphate pathway; D-glyceraldehyde 3-phosphate and beta-D-fructose 6-phosphate from D-ribose 5-phosphate and D-xylulose 5-phosphate (non-oxidative stage): step 2/3. Functionally, transaldolase is important for the balance of metabolites in the pentose-phosphate pathway. The chain is Probable transaldolase from Geobacter sp. (strain M21).